Consider the following 322-residue polypeptide: Cytochrome c biogenesis protein CcsA (322 aa).

8 consecutive transmembrane segments (helical) span residues 17–37, 44–64, 71–91, 98–118, 143–163, 225–245, 258–273, and 286–306; these read VVSIVITIHLITLLVDEIVGL, GMIATFFCITGLLVTRWIYLG, LYESLIFLSWSFSIIHIVPYF, LSALTAPSAIFTQGFATSGLL, MVLGYAALLCGSLLSVALLVI, VISLGFLFLTIGILSGAVWAN, ETWAFITWTIFAIYLH, and AIVASMGFLIIWICYFGVNLL.

Belongs to the CcmF/CycK/Ccl1/NrfE/CcsA family. In terms of assembly, may interact with Ccs1.

It is found in the plastid. The protein localises to the chloroplast thylakoid membrane. In terms of biological role, required during biogenesis of c-type cytochromes (cytochrome c6 and cytochrome f) at the step of heme attachment. The protein is Cytochrome c biogenesis protein CcsA of Vitis vinifera (Grape).